We begin with the raw amino-acid sequence, 90 residues long: Large ribosomal subunit protein eL31 (90 aa).

The protein belongs to the eukaryotic ribosomal protein eL31 family.

The polypeptide is Large ribosomal subunit protein eL31 (Natronomonas pharaonis (strain ATCC 35678 / DSM 2160 / CIP 103997 / JCM 8858 / NBRC 14720 / NCIMB 2260 / Gabara) (Halobacterium pharaonis)).